Here is a 930-residue protein sequence, read N- to C-terminus: Semaphorin-6C (930 aa).

An N-terminal signal peptide occupies residues 1 to 24 (MPRAPHFMPLLLLLLLLSLPHTQA). Topologically, residues 25 to 604 (AFPQDPLPLL…ASASRSVPIP (580 aa)) are extracellular. A Sema domain is found at 30-516 (PLPLLISDLQ…FSGCIVYLPL (487 aa)). Asparagine 70 is a glycosylation site (N-linked (GlcNAc...) asparagine). 4 disulfides stabilise this stretch: cysteine 111–cysteine 121, cysteine 139–cysteine 148, cysteine 262–cysteine 373, and cysteine 287–cysteine 332. Asparagine 286 carries an N-linked (GlcNAc...) asparagine glycan. N-linked (GlcNAc...) asparagine glycosylation is present at asparagine 437. Disulfide bonds link cysteine 479/cysteine 510, cysteine 519/cysteine 537, cysteine 525/cysteine 570, and cysteine 529/cysteine 545. Residues 554–593 (TDVDQAGNQESMEHGDCQDGATGSQSGPGDSAYGVRRDLP) are disordered. Residues 605-625 (LLLASVAAAFALGASVSGLLV) form a helical membrane-spanning segment. Residues 626–930 (SCACRRAHRR…AVPNGGRFNF (305 aa)) lie on the Cytoplasmic side of the membrane. Disordered regions lie at residues 654 to 674 (LARL…GDAV), 716 to 761 (GDPW…PGQA), 775 to 882 (HGPQ…PGKH), and 908 to 930 (SLKP…RFNF). Residues 829-844 (ASAPARPALSAPAPRL) show a composition bias toward low complexity.

Belongs to the semaphorin family. As to expression, in adult tissues, expressed only in skeletal muscle.

It is found in the cell membrane. In terms of biological role, shows growth cone collapsing activity on dorsal root ganglion (DRG) neurons in vitro. May be a stop signal for the DRG neurons in their target areas, and possibly also for other neurons. May also be involved in the maintenance and remodeling of neuronal connections. The polypeptide is Semaphorin-6C (SEMA6C) (Homo sapiens (Human)).